The following is a 626-amino-acid chain: Glyco-Gag protein (626 aa).

The Cytoplasmic segment spans residues 1–67 (LGDVPGTSGA…VWSRSRAARP (67 aa)). Residues 68–86 (VCCSIVLCCFCLTVFLYLS) form a helical membrane-spanning segment. At 87–626 (ENMGQTATTP…PQASLLTLDD (540 aa)) the chain is on the extracellular side. Asn113 is a glycosylation site (N-linked (GlcNAc...) asparagine; by host). Pro residues-rich tracts occupy residues 199-212 (PSAP…PLST) and 249-261 (DPPP…PPSP). A disordered region spans residues 199–306 (PSAPSLPPEP…STTSQAFPLR (108 aa)). An N-linked (GlcNAc...) asparagine; by host glycan is attached at Asn480. Composition is skewed to basic and acidic residues over residues 522–554 (RETP…EKER) and 574–607 (RQDR…DCPK). The segment at 522–626 (RETPEEREER…PQASLLTLDD (105 aa)) is disordered. The segment at 590 to 607 (DQCAYCKEKGHWARDCPK) adopts a CCHC-type zinc-finger fold.

Post-translationally, glycosylated by host. In terms of processing, cleaved by host near the middle of the molecule, releasing the c-terminal half containing capsid and nucleoprotein domains op GAG.

It localises to the host cell membrane. Functionally, plays a role in viral particle release. Presumably acts by facilitating the fission of the virion bud at the cell surface. May prevent the antiviral activity of murine APOBEC3. In Mus musculus (Mouse), this protein is Glyco-Gag protein.